Reading from the N-terminus, the 678-residue chain is Probable E3 ubiquitin ligase complex SCF subunit sconB (678 aa).

Residues 1 to 52 are disordered; sequence MSTEDNHDSQILTARHRSDASEQSFKSLFGGPSSEDGKETEPDTHDHNHSFS. Basic and acidic residues predominate over residues 35-49; it reads EDGKETEPDTHDHNH. An F-box domain is found at 178–224; that stretch reads IDFITALPPEIAFKILCYLDTTSLCKASQVSRGWRALADDDVVWHRM. The segment at 266-287 is disordered; sequence VVGPRSPDASAESPPSGKRKLE. 8 WD repeats span residues 347 to 375, 387 to 415, 427 to 455, 466 to 496, 508 to 543, 553 to 595, 607 to 635, and 647 to 675; these read GHTN…KIWD, GHES…KVWN, GHRG…KIWN, GHTD…RLWD, GHVG…TSGD, MGLE…RLWE, GHLE…KIWD, and GHSG…RMYS.

The protein belongs to the WD repeat MET30/SCONB/SCON-2 family. Component of the SCF(sconB) E3 ubiquitin ligase complex.

Its pathway is protein modification; protein ubiquitination. Functionally, component of the SCF(sconB) E3 ubiquitin ligase complex involved in the regulation of sulfur metabolite repression, probably by mediating the inactivation or degradation of the metR transcription factor. The polypeptide is Probable E3 ubiquitin ligase complex SCF subunit sconB (sconB) (Emericella nidulans (strain FGSC A4 / ATCC 38163 / CBS 112.46 / NRRL 194 / M139) (Aspergillus nidulans)).